The sequence spans 415 residues: Beta-1,4-glucuronyltransferase 1 (415 aa).

The Cytoplasmic segment spans residues 1 to 8 (MQMSYAIR). Residues 9–36 (CAFYQLLLAALMLVAMLQLLYLSLLSGL) form a helical; Signal-anchor for type II membrane protein membrane-spanning segment. Over 37 to 415 (HGQEEQEQYF…ARYPNSPHRC (379 aa)) the chain is Lumenal. N-linked (GlcNAc...) asparagine glycosylation occurs at Asn204. 2 residues coordinate Mn(2+): Asp227 and Asp229. Asn300 carries an N-linked (GlcNAc...) asparagine glycan.

It belongs to the glycosyltransferase 49 family. As to quaternary structure, interacts with LARGE1 and LARGE2. Mn(2+) is required as a cofactor.

The protein resides in the golgi apparatus membrane. The catalysed reaction is 3-O-[beta-D-Xyl-(1-&gt;4)-Rib-ol-P-Rib-ol-P-3-beta-D-GalNAc-(1-&gt;3)-beta-D-GlcNAc-(1-&gt;4)-(O-6-P-alpha-D-Man)]-Thr-[protein] + UDP-alpha-D-glucuronate = 3-O-[beta-D-GlcA-(1-&gt;3)-beta-D-Xyl-(1-&gt;4)-Rib-ol-P-Rib-ol-P-3-beta-D-GalNAc-(1-&gt;3)-beta-D-GlcNAc-(1-&gt;4)-(O-6-P-alpha-D-Man)]-Thr-[protein] + UDP + H(+). The protein operates within protein modification; protein glycosylation. Beta-1,4-glucuronyltransferase involved in O-mannosylation of alpha-dystroglycan (DAG1). Transfers a glucuronic acid (GlcA) residue onto a xylose (Xyl) acceptor to produce the glucuronyl-beta-1,4-xylose-beta disaccharide primer, which is further elongated by LARGE1, during synthesis of phosphorylated O-mannosyl glycan. Phosphorylated O-mannosyl glycan is a carbohydrate structure present in alpha-dystroglycan (DAG1), which is required for binding laminin G-like domain-containing extracellular proteins with high affinity. Required for axon guidance; via its function in O-mannosylation of alpha-dystroglycan (DAG1). The protein is Beta-1,4-glucuronyltransferase 1 of Mus musculus (Mouse).